We begin with the raw amino-acid sequence, 411 residues long: Multidrug resistance protein MdtG (411 aa).

10 helical membrane-spanning segments follow: residues 14–34 (LFVA…IMPF), 56–76 (LVFS…GGLA), 89–109 (ALGM…WQFL), 113–133 (AVLG…ATQV), 144–164 (TLST…GLLA), 171–191 (PVFY…LLYV), 219–239 (ILSL…IAPI), 254–274 (LAFV…MSAP), 288–308 (ILVF…FVQT), and 376–396 (AVFC…WWCL).

Belongs to the major facilitator superfamily. DHA1 family. MdtG (TC 2.A.1.2.20) subfamily.

It localises to the cell inner membrane. This chain is Multidrug resistance protein MdtG, found in Serratia proteamaculans (strain 568).